Here is a 137-residue protein sequence, read N- to C-terminus: Large ribosomal subunit protein uL16 (137 aa).

It belongs to the universal ribosomal protein uL16 family. In terms of assembly, part of the 50S ribosomal subunit.

Functionally, binds 23S rRNA and is also seen to make contacts with the A and possibly P site tRNAs. In Nitratidesulfovibrio vulgaris (strain DSM 19637 / Miyazaki F) (Desulfovibrio vulgaris), this protein is Large ribosomal subunit protein uL16.